Consider the following 469-residue polypeptide: MSASNCLRCLVRPSAVALVPRQMLQVGGGSLTFTATAATKGASSANTGGRQNANRPQKLRFKKTKKKNVVSSGKPPLPGERKAYRKKIVLSNNNALPVPGLETLRPNDLAKQDNVGSVKALPEDVVDALRAMEAFKPTQCWGIFRQPSVLIRQETVDLTKKMKAAGADGKTIRMVIEGNRVTGKSLLLLQAMTHAFMNDWVVLHIPEAQELTTAVTEYAPIENSPLWTQPTYTLKLLQSFKRANEKVLSRMNTVYSHADLPQIIPVNSPLLQLINSAKEADGAWTVFQALWRELNAENVPGRPPILFSLDGLAHIMKVSDYRNPAFELIHSHDLALVKLFTDCLSGATVMPNGGAVLGATTRGNSPRSASMELAIAQREAEKAGEKEVPQRDPYSKKYDDRVEAVMKSVEILRLKGVSKTEARGLLEYWAASGMLKKRVDESMVSEKWTLSGNGVVGEMERASLLTMKA.

Position 150 (Leu150) interacts with ATP.

Belongs to the mitochondrion-specific ribosomal protein mS29 family. In terms of assembly, component of the mitochondrial small ribosomal subunit (mt-SSU). Mature N.crassa 74S mitochondrial ribosomes consist of a small (37S) and a large (54S) subunit. The 37S small subunit contains a 16S ribosomal RNA (16S mt-rRNA) and 32 different proteins. The 54S large subunit contains a 23S rRNA (23S mt-rRNA) and 42 different proteins.

The protein localises to the mitochondrion. Component of the mitochondrial ribosome (mitoribosome), a dedicated translation machinery responsible for the synthesis of mitochondrial genome-encoded proteins, including at least some of the essential transmembrane subunits of the mitochondrial respiratory chain. The mitoribosomes are attached to the mitochondrial inner membrane and translation products are cotranslationally integrated into the membrane. The polypeptide is Small ribosomal subunit protein mS29 (rsm23) (Neurospora crassa (strain ATCC 24698 / 74-OR23-1A / CBS 708.71 / DSM 1257 / FGSC 987)).